We begin with the raw amino-acid sequence, 105 residues long: Large ribosomal subunit protein uL24 (105 aa).

This sequence belongs to the universal ribosomal protein uL24 family. As to quaternary structure, part of the 50S ribosomal subunit.

Functionally, one of two assembly initiator proteins, it binds directly to the 5'-end of the 23S rRNA, where it nucleates assembly of the 50S subunit. One of the proteins that surrounds the polypeptide exit tunnel on the outside of the subunit. This chain is Large ribosomal subunit protein uL24, found in Marinomonas sp. (strain MWYL1).